The primary structure comprises 120 residues: Fluoride-specific ion channel FluC (120 aa).

3 helical membrane-spanning segments follow: residues phenylalanine 30–leucine 50, valine 66–leucine 86, and leucine 96–valine 116. Na(+) is bound by residues glycine 70 and threonine 73.

This sequence belongs to the fluoride channel Fluc/FEX (TC 1.A.43) family.

The protein localises to the cell inner membrane. The enzyme catalyses fluoride(in) = fluoride(out). Na(+) is not transported, but it plays an essential structural role and its presence is essential for fluoride channel function. In terms of biological role, fluoride-specific ion channel. Important for reducing fluoride concentration in the cell, thus reducing its toxicity. In Pseudoalteromonas translucida (strain TAC 125), this protein is Fluoride-specific ion channel FluC.